Here is a 400-residue protein sequence, read N- to C-terminus: Acetate kinase (400 aa).

Residue asparagine 10 participates in Mg(2+) binding. Lysine 17 contributes to the ATP binding site. Arginine 91 contributes to the substrate binding site. Residue aspartate 148 is the Proton donor/acceptor of the active site. ATP-binding positions include 208 to 212 (HLGNG), 283 to 285 (DCR), and 331 to 335 (GIGEN). Glutamate 385 lines the Mg(2+) pocket.

It belongs to the acetokinase family. As to quaternary structure, homodimer. It depends on Mg(2+) as a cofactor. The cofactor is Mn(2+).

The protein localises to the cytoplasm. It carries out the reaction acetate + ATP = acetyl phosphate + ADP. It participates in metabolic intermediate biosynthesis; acetyl-CoA biosynthesis; acetyl-CoA from acetate: step 1/2. Catalyzes the formation of acetyl phosphate from acetate and ATP. Can also catalyze the reverse reaction. In Shewanella putrefaciens (strain CN-32 / ATCC BAA-453), this protein is Acetate kinase.